The following is a 416-amino-acid chain: Phosphoglycerate kinase (416 aa).

Positions 23, 24, 25, 26, 38, 39, 62, 63, 65, 66, 121, 122, 168, and 169 each coordinate (2R)-3-phosphoglycerate. ADP is bound at residue G212. G212 is a binding site for CDP. Residues A213 and K214 each coordinate AMP. ATP is bound at residue A213. A213 provides a ligand contact to Mg(2+). D217 is a binding site for CDP. A Mg(2+)-binding site is contributed by D217. K218 contributes to the AMP binding site. K218 provides a ligand contact to ATP. Position 236 (G236) interacts with ADP. CDP is bound at residue G236. Residues G237 and G311 each coordinate AMP. ATP-binding residues include G237 and G311. CDP-binding residues include G336 and F341. F341 contacts ADP. Residue E342 coordinates AMP. The ATP site is built by E342, D373, and T374. Residue D373 coordinates Mg(2+).

Belongs to the phosphoglycerate kinase family. In terms of assembly, monomer. It depends on Mg(2+) as a cofactor.

The protein localises to the cytoplasm. The protein resides in the mitochondrion. The catalysed reaction is (2R)-3-phosphoglycerate + ATP = (2R)-3-phospho-glyceroyl phosphate + ADP. Its pathway is carbohydrate degradation; glycolysis; pyruvate from D-glyceraldehyde 3-phosphate: step 2/5. Its function is as follows. Catalyzes one of the two ATP producing reactions in the glycolytic pathway via the reversible conversion of 1,3-diphosphoglycerate to 3-phosphoglycerate. Both L- and D- forms of purine and pyrimidine nucleotides can be used as substrates, but the activity is much lower on pyrimidines. Negatively regulates the biosynthesis of acetyl-CoA from pyruvate in the mitochondrion. This chain is Phosphoglycerate kinase (PGK1), found in Debaryomyces hansenii (strain ATCC 36239 / CBS 767 / BCRC 21394 / JCM 1990 / NBRC 0083 / IGC 2968) (Yeast).